We begin with the raw amino-acid sequence, 99 residues long: Aspartyl/glutamyl-tRNA(Asn/Gln) amidotransferase subunit C (99 aa).

It belongs to the GatC family. Heterotrimer of A, B and C subunits.

It carries out the reaction L-glutamyl-tRNA(Gln) + L-glutamine + ATP + H2O = L-glutaminyl-tRNA(Gln) + L-glutamate + ADP + phosphate + H(+). It catalyses the reaction L-aspartyl-tRNA(Asn) + L-glutamine + ATP + H2O = L-asparaginyl-tRNA(Asn) + L-glutamate + ADP + phosphate + 2 H(+). In terms of biological role, allows the formation of correctly charged Asn-tRNA(Asn) or Gln-tRNA(Gln) through the transamidation of misacylated Asp-tRNA(Asn) or Glu-tRNA(Gln) in organisms which lack either or both of asparaginyl-tRNA or glutaminyl-tRNA synthetases. The reaction takes place in the presence of glutamine and ATP through an activated phospho-Asp-tRNA(Asn) or phospho-Glu-tRNA(Gln). This is Aspartyl/glutamyl-tRNA(Asn/Gln) amidotransferase subunit C from Albidiferax ferrireducens (strain ATCC BAA-621 / DSM 15236 / T118) (Rhodoferax ferrireducens).